The primary structure comprises 201 residues: Cytochrome c4 (201 aa).

The first 20 residues, 1–20 (MNKLLVSLLLTLGLTGLAHA), serve as a signal peptide directing secretion. Heme c contacts are provided by Cys34, Cys37, His38, Met77, Cys130, Cys133, His134, and Met178.

Post-translationally, binds 2 heme c groups covalently per subunit.

It is found in the periplasm. In terms of biological role, diheme, high potential cytochrome c believed to be an intermediate electron donor to terminal oxidation systems. This Pseudomonas aeruginosa (strain ATCC 15692 / DSM 22644 / CIP 104116 / JCM 14847 / LMG 12228 / 1C / PRS 101 / PAO1) protein is Cytochrome c4 (cc4).